A 235-amino-acid chain; its full sequence is MSMLFEARGITKSYALPGRPPLPILREADLSAAEGEMVTIIGASGSGKTTLLNMLGTLDTPDGGSIFFEGEPLFQDGRYRMTKKELARFRNRRIGFIFQFHHLLSDFTAQENVAMAEFIATGRLQPAKERAALLLQELGLSGRLNHLPSELSGGEQQRVAIARALMNQPKLVLADEPSGNLDSENSQRLYELMAALSKERRTSFIIVTHNETYAGMSDRCLRMQDGRLQLCTPLQ.

In terms of domain architecture, ABC transporter spans 5–234; sequence FEARGITKSY…DGRLQLCTPL (230 aa). ATP is bound at residue 42–49; that stretch reads GASGSGKT.

This sequence belongs to the ABC transporter superfamily. Lipoprotein translocase (TC 3.A.1.125) family. The complex is composed of two ATP-binding proteins (LolD) and two transmembrane proteins (LolC and LolE).

The protein resides in the cell inner membrane. Part of the ABC transporter complex LolCDE involved in the translocation of mature outer membrane-directed lipoproteins, from the inner membrane to the periplasmic chaperone, LolA. Responsible for the formation of the LolA-lipoprotein complex in an ATP-dependent manner. This chain is Lipoprotein-releasing system ATP-binding protein LolD 1, found in Chlorobium luteolum (strain DSM 273 / BCRC 81028 / 2530) (Pelodictyon luteolum).